A 206-amino-acid polypeptide reads, in one-letter code: Pyridoxine/pyridoxamine 5'-phosphate oxidase (206 aa).

FMN is bound by residues 55 to 60, 70 to 71, R76, K77, and Q99; these read RVVLLK and YT. Residue K60 coordinates substrate. Positions 117, 121, and 125 each coordinate substrate. FMN-binding positions include 134–135 and W179; that span reads QS. Substrate is bound at residue 185-187; it reads RLH. R189 serves as a coordination point for FMN.

It belongs to the pyridoxamine 5'-phosphate oxidase family. Homodimer. FMN serves as cofactor.

It carries out the reaction pyridoxamine 5'-phosphate + O2 + H2O = pyridoxal 5'-phosphate + H2O2 + NH4(+). The catalysed reaction is pyridoxine 5'-phosphate + O2 = pyridoxal 5'-phosphate + H2O2. It functions in the pathway cofactor metabolism; pyridoxal 5'-phosphate salvage; pyridoxal 5'-phosphate from pyridoxamine 5'-phosphate: step 1/1. Its pathway is cofactor metabolism; pyridoxal 5'-phosphate salvage; pyridoxal 5'-phosphate from pyridoxine 5'-phosphate: step 1/1. Catalyzes the oxidation of either pyridoxine 5'-phosphate (PNP) or pyridoxamine 5'-phosphate (PMP) into pyridoxal 5'-phosphate (PLP). This chain is Pyridoxine/pyridoxamine 5'-phosphate oxidase, found in Myxococcus xanthus (strain DK1622).